We begin with the raw amino-acid sequence, 300 residues long: Probable alpha-L-glutamate ligase (300 aa).

Residues Leu-104–Glu-287 form the ATP-grasp domain. Residues Lys-141, Glu-178–Tyr-179, Asp-187, and Arg-211–Asn-213 contribute to the ATP site. Residues Asp-248, Glu-260, and Asn-262 each coordinate Mg(2+). Positions 248, 260, and 262 each coordinate Mn(2+).

Belongs to the RimK family. It depends on Mg(2+) as a cofactor. The cofactor is Mn(2+).

This chain is Probable alpha-L-glutamate ligase, found in Serratia proteamaculans (strain 568).